We begin with the raw amino-acid sequence, 120 residues long: Large ribosomal subunit protein bL12 (120 aa).

It belongs to the bacterial ribosomal protein bL12 family. In terms of assembly, homodimer. Part of the ribosomal stalk of the 50S ribosomal subunit. Forms a multimeric L10(L12)X complex, where L10 forms an elongated spine to which 2 to 4 L12 dimers bind in a sequential fashion. Binds GTP-bound translation factors.

Its function is as follows. Forms part of the ribosomal stalk which helps the ribosome interact with GTP-bound translation factors. Is thus essential for accurate translation. The protein is Large ribosomal subunit protein bL12 of Lachnoclostridium phytofermentans (strain ATCC 700394 / DSM 18823 / ISDg) (Clostridium phytofermentans).